Consider the following 187-residue polypeptide: Protein TIFY 3B (187 aa).

A compositionally biased stretch (basic and acidic residues) spans 1–10; it reads MTKVKDEPRA. The segment at 1 to 50 is disordered; the sequence is MTKVKDEPRASVEGGCGVADGDGGAAEIGGTGSVEKSINEVRSTEIQTAE. The span at 14–32 shows a compositional bias: gly residues; sequence GGCGVADGDGGAAEIGGTG. Residues 51-86 enclose the Tify domain; it reads PTVPPNQLTIFFGGSVTVFDGLPSEKVQEILRIAAK. Residues 139-163 carry the Jas motif; that stretch reads PIARRHSLQRFLEKRRDRLVNKNPY. Positions 141-148 match the Nuclear localization signal motif; that stretch reads ARRHSLQR. The segment at 152-187 is disordered; it reads KRRDRLVNKNPYPTSDFKKTDVPTGNVSIKEEFPTA.

Belongs to the TIFY/JAZ family. Interacts with MYC2, AFPH2/NINJA, TIFY10A/JAZ1, TIFY10B/JAZ2, TIFY11A/JAZ5, TIFY11B/JAZ6, TIFY5A/JAZ8 and TIFY9/JAZ10. As to quaternary structure, (Microbial infection) Interacts with the pathogenic Pseudomonas syringae HopZ1a protein. (Microbial infection) Acetylated by Pseudomonas syringae HopZ1a. In terms of processing, ubiquitinated. Targeted for degradation by the SCF(COI1) E3 ubiquitin ligase-proteasome pathway during jasmonate signaling.

It localises to the nucleus. In terms of biological role, repressor of jasmonate responses. This Arabidopsis thaliana (Mouse-ear cress) protein is Protein TIFY 3B.